Reading from the N-terminus, the 181-residue chain is UPF0302 protein lmo1921 (181 aa).

Belongs to the UPF0302 family.

This is UPF0302 protein lmo1921 from Listeria monocytogenes serovar 1/2a (strain ATCC BAA-679 / EGD-e).